The following is a 301-amino-acid chain: Phosphatidylglycerol--prolipoprotein diacylglyceryl transferase (301 aa).

3 helical membrane passes run 17–37, 59–79, and 97–117; these read LAVRWYGLMYLVAFIAAIVVG, MLFYGVLGTILGGRLGYVLFY, and GGMSFHGGFLGVTLAMVLFAY. Residue Arg142 participates in a 1,2-diacyl-sn-glycero-3-phospho-(1'-sn-glycerol) binding. The next 2 helical transmembrane spans lie at 230-250 and 265-285; these read MGAISAVFLIGYGLARFTVEF and LSMGQWLSLPMILVGIGLLVW.

It belongs to the Lgt family.

The protein resides in the cell inner membrane. It carries out the reaction L-cysteinyl-[prolipoprotein] + a 1,2-diacyl-sn-glycero-3-phospho-(1'-sn-glycerol) = an S-1,2-diacyl-sn-glyceryl-L-cysteinyl-[prolipoprotein] + sn-glycerol 1-phosphate + H(+). It participates in protein modification; lipoprotein biosynthesis (diacylglyceryl transfer). Its function is as follows. Catalyzes the transfer of the diacylglyceryl group from phosphatidylglycerol to the sulfhydryl group of the N-terminal cysteine of a prolipoprotein, the first step in the formation of mature lipoproteins. This Paraburkholderia xenovorans (strain LB400) protein is Phosphatidylglycerol--prolipoprotein diacylglyceryl transferase.